A 372-amino-acid polypeptide reads, in one-letter code: Putative 8-amino-7-oxononanoate synthase (372 aa).

Substrate is bound at residue arginine 20. Pyridoxal 5'-phosphate is bound at residue 94–95 (GY). Histidine 119 contacts substrate. Residues serine 167, 192-195 (DDAH), and 223-226 (TLSK) each bind pyridoxal 5'-phosphate. The residue at position 226 (lysine 226) is an N6-(pyridoxal phosphate)lysine. Residue threonine 337 participates in substrate binding.

This sequence belongs to the class-II pyridoxal-phosphate-dependent aminotransferase family. BioF subfamily. In terms of assembly, homodimer. The cofactor is pyridoxal 5'-phosphate.

The enzyme catalyses 6-carboxyhexanoyl-[ACP] + L-alanine + H(+) = (8S)-8-amino-7-oxononanoate + holo-[ACP] + CO2. Its pathway is cofactor biosynthesis; biotin biosynthesis. Functionally, catalyzes the decarboxylative condensation of pimeloyl-[acyl-carrier protein] and L-alanine to produce 8-amino-7-oxononanoate (AON), [acyl-carrier protein], and carbon dioxide. The polypeptide is Putative 8-amino-7-oxononanoate synthase (bioF) (Methanocaldococcus jannaschii (strain ATCC 43067 / DSM 2661 / JAL-1 / JCM 10045 / NBRC 100440) (Methanococcus jannaschii)).